The chain runs to 183 residues: MTATAQQLEFLKNSIKSIQDYPKPGILFRDVTSLLEDPKAYALSIELLVERYKNAGITKVVGTEARGFLFGAPVALGLGVGFVPVRKPRKLPRETIAETYELEYGTDQLEIHVDAIKPGDNVLVVDDLLATGGTIEATVKLIRRLGGKVTDAAFIINLFDLGGEQRLEKQGITCYSLMPFPGH.

Belongs to the purine/pyrimidine phosphoribosyltransferase family. In terms of assembly, homodimer.

Its subcellular location is the cytoplasm. The catalysed reaction is AMP + diphosphate = 5-phospho-alpha-D-ribose 1-diphosphate + adenine. The protein operates within purine metabolism; AMP biosynthesis via salvage pathway; AMP from adenine: step 1/1. In terms of biological role, catalyzes a salvage reaction resulting in the formation of AMP, that is energically less costly than de novo synthesis. This chain is Adenine phosphoribosyltransferase, found in Salmonella typhi.